The following is a 116-amino-acid chain: G antigen 2D (116 aa).

The interval 1-116 (MSWRGRSTYR…PEEGEKQSQC (116 aa)) is disordered. Composition is skewed to acidic residues over residues 31–44 (FSDE…EEGE) and 86–95 (ECEDGPDGQE). The segment covering 102–116 (EEVKTPEEGEKQSQC) has biased composition (basic and acidic residues).

This sequence belongs to the GAGE family. As to expression, not expressed in normal tissues, except in testis, but expressed by a large proportion of tumors of various histological origins.

The sequence is that of G antigen 2D (GAGE2D) from Homo sapiens (Human).